A 131-amino-acid polypeptide reads, in one-letter code: Superoxide dismutase [Ni] (131 aa).

Positions 1–14 are excised as a propeptide; sequence MLSRLFAPKVTVSA. Positions 15, 16, and 20 each coordinate Ni(2+).

This sequence belongs to the nickel superoxide dismutase family. In terms of assembly, homohexamer. The hexameric protein has a roughly the shape of a hollow sphere with an outer diameter of 60 angstroms and a large interior cavity. Ni(2+) serves as cofactor.

Its subcellular location is the cytoplasm. It carries out the reaction 2 superoxide + 2 H(+) = H2O2 + O2. The polypeptide is Superoxide dismutase [Ni] (sodN) (Streptomyces coelicolor (strain ATCC BAA-471 / A3(2) / M145)).